We begin with the raw amino-acid sequence, 1375 residues long: DNA-directed RNA polymerase subunit beta (1375 aa).

The protein belongs to the RNA polymerase beta chain family. The RNAP catalytic core consists of 2 alpha, 1 beta, 1 beta' and 1 omega subunit. When a sigma factor is associated with the core the holoenzyme is formed, which can initiate transcription.

The catalysed reaction is RNA(n) + a ribonucleoside 5'-triphosphate = RNA(n+1) + diphosphate. In terms of biological role, DNA-dependent RNA polymerase catalyzes the transcription of DNA into RNA using the four ribonucleoside triphosphates as substrates. This is DNA-directed RNA polymerase subunit beta from Coxiella burnetii (strain Dugway 5J108-111).